A 700-amino-acid chain; its full sequence is E3 ubiquitin-protein ligase SspH1 (700 aa).

Positions 1–395 (MFNIRNTQPS…HSGIRIHFDM (395 aa)) are interaction with target proteins. LRR repeat units lie at residues 217-238 (HITT…PEGL), 239-257 (RELE…SLPQ), 258-279 (GLQK…PPGL), 280-297 (GDLA…EMPP), 298-319 (ALRE…PSGL), 320-337 (QKLW…EMSP), 338-360 (GLQE…TGLS), and 361-381 (SAAR…QALR). Positions 396 to 403 (AGPSVPRE) are linker. Residues 404–700 (ARALHLAVAD…SYLTARWRLN (297 aa)) are E3 ubiquitin-protein ligase catalytic domain. An NEL domain is found at 406 to 700 (ALHLAVADWL…SYLTARWRLN (295 aa)). Cys-492 functions as the Glycyl thioester intermediate in the catalytic mechanism.

It belongs to the LRR-containing bacterial E3 ligase family. As to quaternary structure, interacts (via leucine-rich repeat region) with host PKN1 (via the second REM repeat). In terms of processing, ubiquitinated in the presence of host E1 ubiquitin-activating enzyme, E2 ubiquitin-conjugating enzyme and ubiquitin.

It localises to the secreted. The protein localises to the host cytoplasm. The protein resides in the host nucleus. The enzyme catalyses S-ubiquitinyl-[E2 ubiquitin-conjugating enzyme]-L-cysteine + [acceptor protein]-L-lysine = [E2 ubiquitin-conjugating enzyme]-L-cysteine + N(6)-ubiquitinyl-[acceptor protein]-L-lysine.. Exists in an autoinhibited state in the absence of substrate protein, due to interactions of the leucine-rich repeat domain with the catalytic domain. Is activated upon binding to a substrate protein. Its function is as follows. Effector proteins function to alter host cell physiology and promote bacterial survival in host tissues. This protein is an E3 ubiquitin-protein ligase that interferes with the host's ubiquitination pathway and targets host proteins for proteasomal degradation. Can ubiquitinate ubiquitin, giving rise to polyubiquitin chains (in vitro). Polyubiquitinates host PKN1, leading to its proteasomal degradation. Down-modulates production of host pro-inflammatory cytokines by inhibiting NF-kappa-B-dependent gene expression; this depends only partially on its E3 ubiquitin-protein ligase activity. This Salmonella typhimurium (strain 14028s / SGSC 2262) protein is E3 ubiquitin-protein ligase SspH1 (sspH1).